The primary structure comprises 425 residues: MAGWTVCVDFLYTGDKMLEDACAVISGERVERVHTGGFRGQPDLDLRGRSSLALPGVIDMHVHLRGLKLSYKEDEVSGTAAAASGCVTLVADMPNTQPPLRTPEALREKLASLEAGAKVDYTVYAGVPRSYGEAVEMASMGIAGFKIYPEDLVNLDSIKNVLEAAEEAGILVVLHPESHDMFAGPDYGWLRRVARPCHAEAASVELLHDAARECGCKPRVHITHASCPATVVESKKRGFTVDVTPHHLFLSEEEVAGPTHSWGKVNPPLRGVGERSLLTQLTIEGLVDAIASDHAPHSTWEKWMHPAIAPPGFPWLEWWPGFTAARLMRAVGLERFYSMVSQTPSTILGVGDRCLWDGCPATISVLQLERTRVYHKGYTKALYTPVLGMESFDCAATVIRGKIAYTAWEGVRGGATGVLATRVVH.

Histidine 61 and histidine 63 together coordinate Zn(2+). Substrate-binding positions include 63–65 (HLR) and asparagine 95. Positions 146, 175, 224, and 293 each coordinate Zn(2+). An N6-carboxylysine modification is found at lysine 146. Aspartate 293 is a catalytic residue. Residues histidine 297 and 311 to 312 (PG) each bind substrate.

The protein belongs to the metallo-dependent hydrolases superfamily. DHOase family. Class I DHOase subfamily. Requires Zn(2+) as cofactor.

It carries out the reaction (S)-dihydroorotate + H2O = N-carbamoyl-L-aspartate + H(+). It participates in pyrimidine metabolism; UMP biosynthesis via de novo pathway; (S)-dihydroorotate from bicarbonate: step 3/3. Catalyzes the reversible cyclization of carbamoyl aspartate to dihydroorotate. The protein is Dihydroorotase of Aeropyrum pernix (strain ATCC 700893 / DSM 11879 / JCM 9820 / NBRC 100138 / K1).